Consider the following 501-residue polypeptide: NAD(P)H-quinone oxidoreductase subunit 2, chloroplastic (501 aa).

14 consecutive transmembrane segments (helical) span residues 15-35 (ILPE…DLIL), 42-62 (VFFF…IFQL), 82-102 (IFRI…IDFI), 107-127 (LAIT…MFLC), 132-152 (LITI…LSGY), 167-187 (LLIG…LYGL), 210-230 (FGSL…LSLV), 244-264 (PTPV…ALLV), 278-298 (WHSL…LVAI), 307-327 (LAYS…TGNF), 334-354 (IVYL…IILF), 378-398 (FSLA…GFFG), 410-430 (GLYF…YYYL), and 466-486 (VSII…NPII).

The protein belongs to the complex I subunit 2 family. In terms of assembly, NDH is composed of at least 16 different subunits, 5 of which are encoded in the nucleus.

The protein localises to the plastid. Its subcellular location is the chloroplast thylakoid membrane. It catalyses the reaction a plastoquinone + NADH + (n+1) H(+)(in) = a plastoquinol + NAD(+) + n H(+)(out). The enzyme catalyses a plastoquinone + NADPH + (n+1) H(+)(in) = a plastoquinol + NADP(+) + n H(+)(out). In terms of biological role, NDH shuttles electrons from NAD(P)H:plastoquinone, via FMN and iron-sulfur (Fe-S) centers, to quinones in the photosynthetic chain and possibly in a chloroplast respiratory chain. The immediate electron acceptor for the enzyme in this species is believed to be plastoquinone. Couples the redox reaction to proton translocation, and thus conserves the redox energy in a proton gradient. The polypeptide is NAD(P)H-quinone oxidoreductase subunit 2, chloroplastic (Physcomitrium patens (Spreading-leaved earth moss)).